We begin with the raw amino-acid sequence, 559 residues long: DNA ligase (559 aa).

Glu247 contacts ATP. The N6-AMP-lysine intermediate role is filled by Lys249. ATP contacts are provided by Arg254, Arg269, Glu299, Phe339, Arg414, and Lys420.

This sequence belongs to the ATP-dependent DNA ligase family. Mg(2+) serves as cofactor.

The catalysed reaction is ATP + (deoxyribonucleotide)n-3'-hydroxyl + 5'-phospho-(deoxyribonucleotide)m = (deoxyribonucleotide)n+m + AMP + diphosphate.. It carries out the reaction NAD(+) + (deoxyribonucleotide)n-3'-hydroxyl + 5'-phospho-(deoxyribonucleotide)m = (deoxyribonucleotide)n+m + AMP + beta-nicotinamide D-nucleotide.. In terms of biological role, DNA ligase that seals nicks in double-stranded DNA during DNA replication, DNA recombination and DNA repair. Shows high activity with either ATP or NAD(+). The sequence is that of DNA ligase from Thermococcus fumicolans.